A 404-amino-acid polypeptide reads, in one-letter code: Argininosuccinate synthase (404 aa).

Residues 10-18 (AYSGGVDTS) and Ala38 contribute to the ATP site. Residue Tyr89 coordinates L-citrulline. Gly119 is a binding site for ATP. L-aspartate-binding residues include Thr121, Asn125, and Asp126. Position 125 (Asn125) interacts with L-citrulline. L-citrulline contacts are provided by Arg129, Ser177, Ser186, Glu262, and Tyr274.

It belongs to the argininosuccinate synthase family. Type 1 subfamily. As to quaternary structure, homotetramer.

Its subcellular location is the cytoplasm. The catalysed reaction is L-citrulline + L-aspartate + ATP = 2-(N(omega)-L-arginino)succinate + AMP + diphosphate + H(+). It functions in the pathway amino-acid biosynthesis; L-arginine biosynthesis; L-arginine from L-ornithine and carbamoyl phosphate: step 2/3. This is Argininosuccinate synthase from Prochlorococcus marinus subsp. pastoris (strain CCMP1986 / NIES-2087 / MED4).